A 158-amino-acid chain; its full sequence is Pyruvoyl-dependent arginine decarboxylase (158 aa).

Ser44 carries the post-translational modification Pyruvic acid (Ser).

Belongs to the PdaD family. The cofactor is pyruvate.

It carries out the reaction L-arginine + H(+) = agmatine + CO2. The polypeptide is Pyruvoyl-dependent arginine decarboxylase (Pyrococcus abyssi (strain GE5 / Orsay)).